A 90-amino-acid chain; its full sequence is Probable Fe(2+)-trafficking protein (90 aa).

The protein belongs to the Fe(2+)-trafficking protein family.

Its function is as follows. Could be a mediator in iron transactions between iron acquisition and iron-requiring processes, such as synthesis and/or repair of Fe-S clusters in biosynthetic enzymes. This chain is Probable Fe(2+)-trafficking protein, found in Marinobacter nauticus (strain ATCC 700491 / DSM 11845 / VT8) (Marinobacter aquaeolei).